We begin with the raw amino-acid sequence, 38 residues long: Photosystem II reaction center protein L (38 aa).

A helical transmembrane segment spans residues serine 17–phenylalanine 37.

This sequence belongs to the PsbL family. As to quaternary structure, PSII is composed of 1 copy each of membrane proteins PsbA, PsbB, PsbC, PsbD, PsbE, PsbF, PsbH, PsbI, PsbJ, PsbK, PsbL, PsbM, PsbT, PsbX, PsbY, PsbZ, Psb30/Ycf12, at least 3 peripheral proteins of the oxygen-evolving complex and a large number of cofactors. It forms dimeric complexes.

The protein resides in the plastid. The protein localises to the chloroplast thylakoid membrane. Its function is as follows. One of the components of the core complex of photosystem II (PSII). PSII is a light-driven water:plastoquinone oxidoreductase that uses light energy to abstract electrons from H(2)O, generating O(2) and a proton gradient subsequently used for ATP formation. It consists of a core antenna complex that captures photons, and an electron transfer chain that converts photonic excitation into a charge separation. This subunit is found at the monomer-monomer interface and is required for correct PSII assembly and/or dimerization. The chain is Photosystem II reaction center protein L from Chlorokybus atmophyticus (Soil alga).